The chain runs to 61 residues: Metallothionein-2 (61 aa).

Methionine 1 is subject to N-acetylmethionine. The interval 1-29 (MDPNCSCATDGSCSCSGSCKCKECKCTTC) is beta. Residues cysteine 5, cysteine 7, cysteine 13, cysteine 15, cysteine 19, cysteine 21, cysteine 24, cysteine 26, cysteine 29, cysteine 33, cysteine 34, cysteine 36, cysteine 37, cysteine 41, cysteine 44, cysteine 48, cysteine 50, and cysteine 57 each contribute to the a divalent metal cation site. An alpha region spans residues 30-61 (KKSCCSCCPVGCAKCSQGCVCKEASEKCSCCA). Serine 58 carries the post-translational modification Phosphoserine. A divalent metal cation is bound by residues cysteine 59 and cysteine 60.

It belongs to the metallothionein superfamily. Type 1 family.

Functionally, metallothioneins have a high content of cysteine residues that bind various heavy metals; these proteins are transcriptionally regulated by both heavy metals and glucocorticoids. This chain is Metallothionein-2 (MT2), found in Mesocricetus auratus (Golden hamster).